The primary structure comprises 666 residues: tRNA 5-methylaminomethyl-2-thiouridine biosynthesis bifunctional protein MnmC (666 aa).

The tract at residues 1 to 245 is tRNA (mnm(5)s(2)U34)-methyltransferase; that stretch reads MKQYAIQPAT…KREMLCGVME (245 aa). The interval 270-666 is FAD-dependent cmnm(5)s(2)U34 oxidoreductase; sequence IGGGIASALL…RKLLKGKAVK (397 aa).

The protein in the N-terminal section; belongs to the methyltransferase superfamily. tRNA (mnm(5)s(2)U34)-methyltransferase family. In the C-terminal section; belongs to the DAO family. FAD is required as a cofactor.

It localises to the cytoplasm. The catalysed reaction is 5-aminomethyl-2-thiouridine(34) in tRNA + S-adenosyl-L-methionine = 5-methylaminomethyl-2-thiouridine(34) in tRNA + S-adenosyl-L-homocysteine + H(+). Catalyzes the last two steps in the biosynthesis of 5-methylaminomethyl-2-thiouridine (mnm(5)s(2)U) at the wobble position (U34) in tRNA. Catalyzes the FAD-dependent demodification of cmnm(5)s(2)U34 to nm(5)s(2)U34, followed by the transfer of a methyl group from S-adenosyl-L-methionine to nm(5)s(2)U34, to form mnm(5)s(2)U34. In Salmonella choleraesuis (strain SC-B67), this protein is tRNA 5-methylaminomethyl-2-thiouridine biosynthesis bifunctional protein MnmC.